We begin with the raw amino-acid sequence, 321 residues long: Lipoyl synthase (321 aa).

Residues Cys68, Cys73, Cys79, Cys94, Cys98, Cys101, and Ser308 each contribute to the [4Fe-4S] cluster site. The region spanning 80 to 297 is the Radical SAM core domain; that stretch reads FNHGTATFMI…KAEALAMGFT (218 aa).

It belongs to the radical SAM superfamily. Lipoyl synthase family. [4Fe-4S] cluster is required as a cofactor.

The protein localises to the cytoplasm. The catalysed reaction is [[Fe-S] cluster scaffold protein carrying a second [4Fe-4S](2+) cluster] + N(6)-octanoyl-L-lysyl-[protein] + 2 oxidized [2Fe-2S]-[ferredoxin] + 2 S-adenosyl-L-methionine + 4 H(+) = [[Fe-S] cluster scaffold protein] + N(6)-[(R)-dihydrolipoyl]-L-lysyl-[protein] + 4 Fe(3+) + 2 hydrogen sulfide + 2 5'-deoxyadenosine + 2 L-methionine + 2 reduced [2Fe-2S]-[ferredoxin]. The protein operates within protein modification; protein lipoylation via endogenous pathway; protein N(6)-(lipoyl)lysine from octanoyl-[acyl-carrier-protein]: step 2/2. In terms of biological role, catalyzes the radical-mediated insertion of two sulfur atoms into the C-6 and C-8 positions of the octanoyl moiety bound to the lipoyl domains of lipoate-dependent enzymes, thereby converting the octanoylated domains into lipoylated derivatives. The polypeptide is Lipoyl synthase (Escherichia fergusonii (strain ATCC 35469 / DSM 13698 / CCUG 18766 / IAM 14443 / JCM 21226 / LMG 7866 / NBRC 102419 / NCTC 12128 / CDC 0568-73)).